The primary structure comprises 434 residues: Tol-Pal system protein TolB (434 aa).

The first 21 residues, Met1–Ala21, serve as a signal peptide directing secretion. The segment at Gly411 to Pro434 is disordered.

It belongs to the TolB family. As to quaternary structure, the Tol-Pal system is composed of five core proteins: the inner membrane proteins TolA, TolQ and TolR, the periplasmic protein TolB and the outer membrane protein Pal. They form a network linking the inner and outer membranes and the peptidoglycan layer.

Its subcellular location is the periplasm. Part of the Tol-Pal system, which plays a role in outer membrane invagination during cell division and is important for maintaining outer membrane integrity. The protein is Tol-Pal system protein TolB of Anaeromyxobacter sp. (strain K).